Here is a 586-residue protein sequence, read N- to C-terminus: Exocyst complex component EXO70A3 (586 aa).

2 N-linked (GlcNAc...) asparagine glycosylation sites follow: N65 and N106. A disordered region spans residues 119–149 (CLPSNLRPPSDDEGSDGKSHDPQSNGLGKTD). Residues 258–278 (FAEITTISFGMLLSFGYAIAI) traverse the membrane as a helical segment. N321 and N487 each carry an N-linked (GlcNAc...) asparagine glycan.

The protein belongs to the EXO70 family. As to quaternary structure, subunit of the exocyst complex. As to expression, confined to the outer layer of the columella cells in the root tips of young seedlings.

It localises to the membrane. Functionally, component of the exocyst complex involved in the docking of exocytic vesicles with fusion sites on the plasma membrane during regulated or polarized secretion. Involved in PIN4 exocytosis and gravitropic responses in columella cells. By monitoring PIN4 distribution in columella cells, modulates auxin repartition and subsequently regulates the root system architecture (RSA), thus being a component of the auxin-dependent root directional growth (ARD). The sequence is that of Exocyst complex component EXO70A3 from Arabidopsis thaliana (Mouse-ear cress).